Here is a 569-residue protein sequence, read N- to C-terminus: Pyruvate decarboxylase (569 aa).

Pyruvate is bound by residues Asp38 and His124. Thiamine diphosphate is bound by residues Thr398 and 421 to 423 (GSI). Position 451 (Asp451) interacts with Mg(2+). Thiamine diphosphate contacts are provided by residues 452-453 (GS) and 478-483 (NEGYTI). Mg(2+)-binding residues include Asn478 and Gly480. Pyruvate is bound at residue Glu484.

Belongs to the TPP enzyme family. As to quaternary structure, homotetramer. The cofactor is Mg(2+). Thiamine diphosphate is required as a cofactor.

It carries out the reaction a 2-oxocarboxylate + H(+) = an aldehyde + CO2. It catalyses the reaction pyruvate + H(+) = acetaldehyde + CO2. The sequence is that of Pyruvate decarboxylase (pdcA) from Aspergillus fumigatus (strain ATCC MYA-4609 / CBS 101355 / FGSC A1100 / Af293) (Neosartorya fumigata).